A 165-amino-acid polypeptide reads, in one-letter code: PTS system glucose-specific EIIA component (165 aa).

One can recognise a PTS EIIA type-1 domain in the interval 33–137 (DPVFAGRMMG…STITPIVITN (105 aa)). Histidine 70 and histidine 85 together coordinate Zn(2+). Residue histidine 85 is the Tele-phosphohistidine intermediate; for EIIA activity of the active site. A Phosphohistidine; by HPr modification is found at histidine 85.

In terms of assembly, heterodimer with glycerol kinase (glpk). Requires Zn(2+) as cofactor.

Its subcellular location is the cytoplasm. Its function is as follows. The phosphoenolpyruvate-dependent sugar phosphotransferase system (sugar PTS), a major carbohydrate active transport system, catalyzes the phosphorylation of incoming sugar substrates concomitantly with their translocation across the cell membrane. The enzyme II complex composed of PtsG and Crr is involved in glucose transport. This Bacillus anthracis protein is PTS system glucose-specific EIIA component (crr).